Here is a 131-residue protein sequence, read N- to C-terminus: Large ribosomal subunit protein uL14m (131 aa).

The protein belongs to the universal ribosomal protein uL14 family. Component of the mitochondrial large ribosomal subunit (mt-LSU). Mature N.crassa 74S mitochondrial ribosomes consist of a small (37S) and a large (54S) subunit. The 37S small subunit contains a 16S ribosomal RNA (16S mt-rRNA) and 32 different proteins. The 54S large subunit contains a 23S rRNA (23S mt-rRNA) and 42 different proteins.

The protein localises to the mitochondrion. Functionally, component of the mitochondrial ribosome (mitoribosome), a dedicated translation machinery responsible for the synthesis of mitochondrial genome-encoded proteins, including at least some of the essential transmembrane subunits of the mitochondrial respiratory chain. The mitoribosomes are attached to the mitochondrial inner membrane and translation products are cotranslationally integrated into the membrane. The chain is Large ribosomal subunit protein uL14m (mrpl38) from Neurospora crassa (strain ATCC 24698 / 74-OR23-1A / CBS 708.71 / DSM 1257 / FGSC 987).